A 538-amino-acid chain; its full sequence is Probable ribonuclease 3 (538 aa).

RNase III domains lie at 24–149 and 238–381; these read IKSY…LNFG and ASQM…EGYL. The region spanning 408 to 477 is the DRBM domain; it reads LISQNIEVLH…NYKDLILQLY (70 aa).

This sequence belongs to the ribonuclease III family.

The enzyme catalyses Endonucleolytic cleavage to 5'-phosphomonoester.. Functionally, digests double-stranded RNA. This chain is Probable ribonuclease 3, found in Acanthamoeba polyphaga (Amoeba).